The following is a 107-amino-acid chain: Thioredoxin-1 (107 aa).

A Thioredoxin domain is found at 2–106 (ASVRTMTDFH…LTNMMAKLVK (105 aa)). Active-site nucleophile residues include Cys-31 and Cys-34. A disulfide bridge connects residues Cys-31 and Cys-34.

The protein belongs to the thioredoxin family.

It localises to the nucleus. Participates in various redox reactions through the reversible oxidation of its active center dithiol to a disulfide and catalyzes dithiol-disulfide exchange reactions. As a reducing substrate of peroxiredoxin 1, thioredoxin 2 is preferred over thioredoxin 1. Required for female meiosis and early embryonic development. The chain is Thioredoxin-1 (dhd) from Drosophila yakuba (Fruit fly).